The following is a 437-amino-acid chain: Methylenetetrahydrofolate--tRNA-(uracil-5-)-methyltransferase TrmFO (437 aa).

An FAD-binding site is contributed by 8-13; the sequence is GAGLAG.

Belongs to the MnmG family. TrmFO subfamily. It depends on FAD as a cofactor.

The protein resides in the cytoplasm. It carries out the reaction uridine(54) in tRNA + (6R)-5,10-methylene-5,6,7,8-tetrahydrofolate + NADH + H(+) = 5-methyluridine(54) in tRNA + (6S)-5,6,7,8-tetrahydrofolate + NAD(+). The catalysed reaction is uridine(54) in tRNA + (6R)-5,10-methylene-5,6,7,8-tetrahydrofolate + NADPH + H(+) = 5-methyluridine(54) in tRNA + (6S)-5,6,7,8-tetrahydrofolate + NADP(+). Functionally, catalyzes the folate-dependent formation of 5-methyl-uridine at position 54 (M-5-U54) in all tRNAs. The protein is Methylenetetrahydrofolate--tRNA-(uracil-5-)-methyltransferase TrmFO of Desulfitobacterium hafniense (strain Y51).